Consider the following 132-residue polypeptide: Small ribosomal subunit protein uS8 (132 aa).

Belongs to the universal ribosomal protein uS8 family. As to quaternary structure, part of the 30S ribosomal subunit. Contacts proteins S5 and S12.

Its function is as follows. One of the primary rRNA binding proteins, it binds directly to 16S rRNA central domain where it helps coordinate assembly of the platform of the 30S subunit. This is Small ribosomal subunit protein uS8 from Tropheryma whipplei (strain Twist) (Whipple's bacillus).